Reading from the N-terminus, the 420-residue chain is UDP-N-acetylglucosamine 1-carboxyvinyltransferase (420 aa).

Position 22-23 (22-23 (KN)) interacts with phosphoenolpyruvate. Position 93 (Arg93) interacts with UDP-N-acetyl-alpha-D-glucosamine. Cys117 functions as the Proton donor in the catalytic mechanism. Cys117 carries the post-translational modification 2-(S-cysteinyl)pyruvic acid O-phosphothioketal. Asp307 and Ile329 together coordinate UDP-N-acetyl-alpha-D-glucosamine.

The protein belongs to the EPSP synthase family. MurA subfamily.

It localises to the cytoplasm. The enzyme catalyses phosphoenolpyruvate + UDP-N-acetyl-alpha-D-glucosamine = UDP-N-acetyl-3-O-(1-carboxyvinyl)-alpha-D-glucosamine + phosphate. It participates in cell wall biogenesis; peptidoglycan biosynthesis. Functionally, cell wall formation. Adds enolpyruvyl to UDP-N-acetylglucosamine. This Shewanella pealeana (strain ATCC 700345 / ANG-SQ1) protein is UDP-N-acetylglucosamine 1-carboxyvinyltransferase.